The primary structure comprises 272 residues: HTH-type transcriptional repressor AllR (272 aa).

The tract at residues 1–20 is disordered; that stretch reads MTEVRRRGRPGQAEPTAQKG. Positions 21–83 constitute an HTH iclR-type domain; sequence AQALERGIAI…SQLGWWHIGL (63 aa). Residues 43–62 constitute a DNA-binding region (H-T-H motif); it reads VSDISGSLDLPLSTTFRLLK. In terms of domain architecture, IclR-ED spans 98–267; that stretch reads VLSVAGPFMH…AKDISTALGL (170 aa). Residues 154 to 156, Asp207, Cys217, and 234 to 236 each bind glyoxylate; these read SGA and SIS.

In terms of biological role, negative regulator of allantoin and glyoxylate utilization operons. Binds to the gcl promoter and to the allS-allA intergenic region. The protein is HTH-type transcriptional repressor AllR (allR) of Salmonella paratyphi A (strain ATCC 9150 / SARB42).